Here is a 370-residue protein sequence, read N- to C-terminus: tRNA/tmRNA (uracil-C(5))-methyltransferase (370 aa).

S-adenosyl-L-methionine contacts are provided by Gln-190, Tyr-218, Asn-223, Glu-239, and Asp-299. Cys-324 acts as the Nucleophile in catalysis. The active-site Proton acceptor is Glu-358.

This sequence belongs to the class I-like SAM-binding methyltransferase superfamily. RNA M5U methyltransferase family. TrmA subfamily.

The catalysed reaction is uridine(54) in tRNA + S-adenosyl-L-methionine = 5-methyluridine(54) in tRNA + S-adenosyl-L-homocysteine + H(+). The enzyme catalyses uridine(341) in tmRNA + S-adenosyl-L-methionine = 5-methyluridine(341) in tmRNA + S-adenosyl-L-homocysteine + H(+). Functionally, dual-specificity methyltransferase that catalyzes the formation of 5-methyluridine at position 54 (m5U54) in all tRNAs, and that of position 341 (m5U341) in tmRNA (transfer-mRNA). The polypeptide is tRNA/tmRNA (uracil-C(5))-methyltransferase (Sodalis glossinidius (strain morsitans)).